The primary structure comprises 526 residues: Peptide chain release factor 3 (526 aa).

Residues 8–277 (NKRRTFAIIS…GLTEWAPKPQ (270 aa)) form the tr-type G domain. Residues 17-24 (SHPDAGKT), 85-89 (DTPGH), and 139-142 (NKLD) each bind GTP.

This sequence belongs to the TRAFAC class translation factor GTPase superfamily. Classic translation factor GTPase family. PrfC subfamily.

It is found in the cytoplasm. Increases the formation of ribosomal termination complexes and stimulates activities of RF-1 and RF-2. It binds guanine nucleotides and has strong preference for UGA stop codons. It may interact directly with the ribosome. The stimulation of RF-1 and RF-2 is significantly reduced by GTP and GDP, but not by GMP. The protein is Peptide chain release factor 3 of Actinobacillus pleuropneumoniae serotype 3 (strain JL03).